The primary structure comprises 715 residues: MKVGELNVSEKIKEILRERGIEELYPPQAEALTSGVLEGENLLVAIPTASGKTLIAEIAIANKLLEEGGKAVYIVPLKALAEEKFREFKDWERLGLKVAMATGDYDSKDEWLGKYDIIIATAEKFDSLLRHGSSWIRDVKMLVIDEIHLIGSRDRGATLEFIITQMLGRAQIIGLSATIGNPEELAEWLNAKLIRSDWRPVKLRKGVFYQGFVFWEDGGSERYNSWEELVYDAVKKGKGALVFVNMRRKAEKTALELAKKVKNYLDRKELRELRELAESLEENPTNEKLAKALLSGVAFHHAGLGRDERVLVEDNFRKGLIKVVVATPTLSAGINTPAFRVIIRDTWRYSEFGMERIPVLEVQQMMGRAGRPRYDEVGEAIIVSTTEEPSLVIDHYIKGKPEKLFSQLSNESILRSQILALIATFGYSEFKEIYDFLERTFYAHQGKDPYMLEEKIRRIIYFLLENEFIEVTLEDEIKPLPLGVRTTKLYIDPMTAKIFKDTLPRIEKNPNPLGIFHMISLAPDLTPLSYSKRETSMLEDEYYSLMDRLYFELDYENERKFFRAFKTALVLNAWINEVPEGEIVERFNVEPGDIYRIVETAEWLIYSLGEIAKVLEASQEVVDYVNTLRLRVKHGIREELIPLMELPMVGRKRARALYNAGFKDLESIRNAKPSELLRIEGIGAKIVEGIFKYLGKEVKITERPRKGTLDYFLNP.

Positions 1–29 (MKVGELNVSEKIKEILRERGIEELYPPQA) match the Q motif motif. ATP is bound by residues Gln-28 and 46-53 (IPTASGKT). In terms of domain architecture, Helicase ATP-binding spans 33–197 (TSGVLEGENL…WLNAKLIRSD (165 aa)). The DEAH box motif lies at 145 to 148 (DEIH). In terms of domain architecture, Helicase C-terminal spans 226 to 422 (WEELVYDAVK…ILRSQILALI (197 aa)).

Belongs to the helicase family. Hel308 subfamily. As to quaternary structure, monomer.

The catalysed reaction is Couples ATP hydrolysis with the unwinding of duplex DNA by translocating in the 3'-5' direction.. It carries out the reaction ATP + H2O = ADP + phosphate + H(+). In terms of biological role, DNA-dependent ATPase and 3'-5' DNA helicase that may be involved in repair of stalled replication forks. Functionally, rapidly unwinds double-stranded (ds)DNA with a 3'-overhang, has no strand reannealing capabilities. Binds single-stranded (ss)DNA, dsDNA with a 3'-overhang and ssRNA. This chain is ATP-dependent DNA helicase Hel308, found in Pyrococcus abyssi (strain GE5 / Orsay).